The following is a 274-amino-acid chain: 2,3,4,5-tetrahydropyridine-2,6-dicarboxylate N-succinyltransferase (274 aa).

Residues R104 and D141 each coordinate substrate.

This sequence belongs to the transferase hexapeptide repeat family. As to quaternary structure, homotrimer.

Its subcellular location is the cytoplasm. It catalyses the reaction (S)-2,3,4,5-tetrahydrodipicolinate + succinyl-CoA + H2O = (S)-2-succinylamino-6-oxoheptanedioate + CoA. It participates in amino-acid biosynthesis; L-lysine biosynthesis via DAP pathway; LL-2,6-diaminopimelate from (S)-tetrahydrodipicolinate (succinylase route): step 1/3. This Citrobacter koseri (strain ATCC BAA-895 / CDC 4225-83 / SGSC4696) protein is 2,3,4,5-tetrahydropyridine-2,6-dicarboxylate N-succinyltransferase.